We begin with the raw amino-acid sequence, 399 residues long: Elongation factor Tu 1 (399 aa).

Residues 10–209 (KPHVNIGTIG…QVDTYIPEPE (200 aa)) form the tr-type G domain. The interval 19 to 26 (GHVDHGKT) is G1. 19 to 26 (GHVDHGKT) provides a ligand contact to GTP. Residue Thr26 coordinates Mg(2+). The segment at 60–64 (GITIA) is G2. Residues 81–84 (DCPG) form a G3 region. Residues 81 to 85 (DCPGH) and 136 to 139 (NKAD) each bind GTP. Positions 136–139 (NKAD) are G4. A G5 region spans residues 174-176 (SAL).

This sequence belongs to the TRAFAC class translation factor GTPase superfamily. Classic translation factor GTPase family. EF-Tu/EF-1A subfamily. As to quaternary structure, monomer.

Its subcellular location is the cytoplasm. It catalyses the reaction GTP + H2O = GDP + phosphate + H(+). In terms of biological role, GTP hydrolase that promotes the GTP-dependent binding of aminoacyl-tRNA to the A-site of ribosomes during protein biosynthesis. In Syntrophotalea carbinolica (strain DSM 2380 / NBRC 103641 / GraBd1) (Pelobacter carbinolicus), this protein is Elongation factor Tu 1.